The chain runs to 282 residues: Methyltransferase tpcH (282 aa).

Belongs to the class I-like SAM-binding methyltransferase superfamily. Specifically expressed in conidia.

It participates in secondary metabolite biosynthesis. Its function is as follows. Methyltransferase; part of the gene cluster that mediates the biosynthesis of trypacidin, a mycotoxin with antiprotozoal activity and that plays a role in the infection process. The pathway begins with the synthesis of atrochrysone thioester by the polyketide synthase (PKS) tpcC. The atrochrysone carboxyl ACP thioesterase tpcB then breaks the thioester bond and releases the atrochrysone carboxylic acid from tpcC. The decarboxylase tpcK converts atrochrysone carboxylic acid to atrochrysone which is further reduced into emodin anthrone. The next step is performed by the emodin anthrone oxygenase tpcL that catalyzes the oxidation of emodinanthrone to emodin. Emodin O-methyltransferase encoded by tpcA catalyzes methylation of the 8-hydroxy group of emodin to form questin. Ring cleavage of questin by questin oxidase tpcI leads to desmethylsulochrin via several intermediates including questin epoxide. Another methylation step catalyzed by tpcM leads to the formation of sulochrin which is further converted to monomethylsulfochrin by tpcH. Finally, the tpcJ catalyzes the conversion of monomethylsulfochrin to trypacidin. Trypacidin is toxic for human pulmonary and bronchial epithelial cells by initiating the intracellular formation of nitric oxide (NO) and hydrogen peroxide (H(2)O(2)), thus triggering host necrotic cell death. The trypacidin pathway is also able to produce endocrocin via a distinct route from the endocrocin Enc pathway. This Aspergillus fumigatus (strain ATCC MYA-4609 / CBS 101355 / FGSC A1100 / Af293) (Neosartorya fumigata) protein is Methyltransferase tpcH.